Reading from the N-terminus, the 341-residue chain is Ketol-acid reductoisomerase (NADP(+)) (341 aa).

Positions 2–182 (AKIYYNDDAD…GGTRAGVIET (181 aa)) constitute a KARI N-terminal Rossmann domain. Residues 25 to 28 (YGSQ), Ser-51, Ser-53, and 83 to 86 (DQVQ) each bind NADP(+). His-108 is an active-site residue. Residue Gly-134 participates in NADP(+) binding. Residues 183–328 (TFTEETESDL…RKLRSLFAWE (146 aa)) enclose the KARI C-terminal knotted domain. The Mg(2+) site is built by Asp-191, Glu-195, Glu-227, and Glu-231. Ser-252 provides a ligand contact to substrate.

Belongs to the ketol-acid reductoisomerase family. Mg(2+) serves as cofactor.

It catalyses the reaction (2R)-2,3-dihydroxy-3-methylbutanoate + NADP(+) = (2S)-2-acetolactate + NADPH + H(+). The catalysed reaction is (2R,3R)-2,3-dihydroxy-3-methylpentanoate + NADP(+) = (S)-2-ethyl-2-hydroxy-3-oxobutanoate + NADPH + H(+). Its pathway is amino-acid biosynthesis; L-isoleucine biosynthesis; L-isoleucine from 2-oxobutanoate: step 2/4. It functions in the pathway amino-acid biosynthesis; L-valine biosynthesis; L-valine from pyruvate: step 2/4. Involved in the biosynthesis of branched-chain amino acids (BCAA). Catalyzes an alkyl-migration followed by a ketol-acid reduction of (S)-2-acetolactate (S2AL) to yield (R)-2,3-dihydroxy-isovalerate. In the isomerase reaction, S2AL is rearranged via a Mg-dependent methyl migration to produce 3-hydroxy-3-methyl-2-ketobutyrate (HMKB). In the reductase reaction, this 2-ketoacid undergoes a metal-dependent reduction by NADPH to yield (R)-2,3-dihydroxy-isovalerate. In Kocuria rhizophila (strain ATCC 9341 / DSM 348 / NBRC 103217 / DC2201), this protein is Ketol-acid reductoisomerase (NADP(+)).